A 307-amino-acid polypeptide reads, in one-letter code: ADP,ATP carrier protein 3 (307 aa).

Solcar repeat units follow at residues 10-103 (TNFA…IKLM), 114-206 (KWFA…LKPL), and 214-300 (GSFL…LQMI). Transmembrane regions (helical) follow at residues 12-39 (FAIN…VKIL), 80-104 (TANV…KLMF), 112-132 (YGKW…LSLL), 182-203 (FMPS…FDSL), and 217-237 (LASF…SYPL). ADP is bound by residues arginine 85 and lysine 97. Arginine 241 lines the ADP pocket. The tract at residues 241 to 246 (RRRMMM) is important for transport activity. The short motif at 241 to 246 (RRRMMM) is the Nucleotide carrier signature motif element. Residues 277–297 (CGANILRSVAGAGVISMYDQL) form a helical membrane-spanning segment.

It belongs to the mitochondrial carrier (TC 2.A.29) family. Monomer.

It localises to the mitochondrion inner membrane. It carries out the reaction ADP(in) + ATP(out) = ADP(out) + ATP(in). Its activity is regulated as follows. The matrix-open state (m-state) is inhibited by the membrane-permeable bongkrekic acid (BKA). The cytoplasmic-open state (c-state) is inhibited by the membrane-impermeable toxic inhibitor carboxyatractyloside (CATR). In terms of biological role, ADP:ATP antiporter that mediates import of ADP into the mitochondrial matrix for ATP synthesis, and export of ATP out to fuel the cell. Cycles between the cytoplasmic-open state (c-state) and the matrix-open state (m-state): operates by the alternating access mechanism with a single substrate-binding site intermittently exposed to either the cytosolic (c-state) or matrix (m-state) side of the inner mitochondrial membrane. This is ADP,ATP carrier protein 3 (AAC3) from Saccharomyces cerevisiae (strain ATCC 204508 / S288c) (Baker's yeast).